We begin with the raw amino-acid sequence, 458 residues long: Transcription factor PCF5 (458 aa).

4 disordered regions span residues 1-103, 159-182, 278-299, and 424-458; these read MGDA…RGPR, GAGAGNAAAPPSSSTHPDSAENSD, MFHHQQHRHGGGGGGGNGTTQQ, and RLPARIQGDEEHNGGGGGNGDKPPPPSSVSSASHH. Over residues 65–74 the composition is skewed to gly residues; the sequence is RGGGGGGGGE. One can recognise a TCP domain in the interval 89-147; sequence RKDRHSKVCTARGPRDRRVRLSAHTAIQFYDVQDRLGYDRPSKAVDWLIKNAKDAIDKL.

Forms homodimers and heterodimers.

It localises to the nucleus. Its function is as follows. Transcription activator. Binds the promoter core sequence 5'-GGNCC-3'. This is Transcription factor PCF5 (PCF5) from Oryza sativa subsp. japonica (Rice).